The sequence spans 718 residues: Serine/threonine-protein kinase tousled-like 2 (718 aa).

Residues 24 to 85 (GVSKGPLNSE…KGTPRGHKIS (62 aa)) form a disordered region. Polar residues predominate over residues 29 to 44 (PLNSESSNQSLCSVGS). Over residues 46 to 61 (SDKEVETPEKKQNDQR) the composition is skewed to basic and acidic residues. A phosphoserine mark is found at S73, Q94, L99, and S102. The segment at 147 to 176 (QQNSPSSTGSGNTEHSCSSQKQISIQHRQT) is disordered. Residues 193-244 (NSDLEKKEGRIDDLLRANCDLRRQIDEQQKMLEKYKERLNRCVTMSKKLLIE) are required for interaction with TLK1 and DYNLL1/LC8. 3 coiled-coil regions span residues 193 to 244 (NSDL…LLIE), 285 to 315 (AFQN…KRKP), and 349 to 397 (HEQE…DNSQ). The interval 310-337 (LAKRKPPAMGQAPPATNEQKQRKSKTNG) is disordered. The region spanning 408-687 (YLLLHLLGRG…VQQLACDPYL (280 aa)) is the Protein kinase domain. Residues 414–422 (LGRGGFSEV) and K437 each bind ATP. The Proton acceptor role is filled by D538. Residue S696 is modified to Phosphoserine; by CHEK1.

The protein belongs to the protein kinase superfamily. Ser/Thr protein kinase family. As to quaternary structure, monomer. May form homodimers; homodimerization may enhance autophosphoylation and enzymatic activity. Heterodimer with TLK1. Interacts with YWHAZ; association with 14-3-3 proteins such as YWHAZ regulates subcellular location. May also interact with FEZ1/LZTS1 and FEZ2. Interacts with CHD7 and CHD8. Interacts with DYNLL1/LC8. Mg(2+) is required as a cofactor. Post-translationally, phosphorylated at Ser-696, probably by CHEK1. In terms of processing, autophosphorylated; phosphorylation promotes the assembly of higher order oligomers and enzymatic activity. Ubiquitously expressed in all tissues examined, with high levels in heart and testis, in particular the pachytene spermatocytes and in round spermatids. Some evidence for the existence of a testis-specific isoform suggesting a role in spermatogenesis.

The protein resides in the nucleus. Its subcellular location is the nucleoplasm. It is found in the cytoplasm. The protein localises to the perinuclear region. It localises to the cytoskeleton. It catalyses the reaction L-seryl-[protein] + ATP = O-phospho-L-seryl-[protein] + ADP + H(+). It carries out the reaction L-threonyl-[protein] + ATP = O-phospho-L-threonyl-[protein] + ADP + H(+). Cell cycle-regulated, with maximal activity in the S-phase. Rapidly and transiently inhibited by phosphorylation following the generation of DNA double-stranded breaks during S-phase, probably by CHEK1, possibly at Ser-696. This inhibition is cell cycle checkpoint- and ATM-dependent. Serine/threonine-protein kinase involved in the process of chromatin assembly and probably also DNA replication, transcription, repair, and chromosome segregation. Phosphorylates the chromatin assembly factors ASF1A and ASF1B. Phosphorylation of ASF1A prevents its proteasome-mediated degradation, thereby enhancing chromatin assembly. Negative regulator of amino acid starvation-induced autophagy. Functionally, testis-specific isoforms may play a role in spermatogenesis. Highly expressed in embryos throughout development. The sequence is that of Serine/threonine-protein kinase tousled-like 2 (Tlk2) from Mus musculus (Mouse).